The chain runs to 485 residues: N-succinylglutamate 5-semialdehyde dehydrogenase (485 aa).

220 to 225 provides a ligand contact to NAD(+); it reads GSANTG. Residues glutamate 243 and cysteine 278 contribute to the active site.

It belongs to the aldehyde dehydrogenase family. AstD subfamily.

It carries out the reaction N-succinyl-L-glutamate 5-semialdehyde + NAD(+) + H2O = N-succinyl-L-glutamate + NADH + 2 H(+). It functions in the pathway amino-acid degradation; L-arginine degradation via AST pathway; L-glutamate and succinate from L-arginine: step 4/5. In terms of biological role, catalyzes the NAD-dependent reduction of succinylglutamate semialdehyde into succinylglutamate. This chain is N-succinylglutamate 5-semialdehyde dehydrogenase, found in Aliivibrio salmonicida (strain LFI1238) (Vibrio salmonicida (strain LFI1238)).